Here is a 601-residue protein sequence, read N- to C-terminus: Protein FAM13C (601 aa).

2 disordered regions span residues 82–134 (SMGN…PQSS) and 192–238 (DGQV…EDLQ). Positions 98–111 (ESGRNHGESQETEH) are enriched in basic and acidic residues. A Phosphoserine modification is found at S130. Low complexity predominate over residues 200 to 217 (DPAPASTQSAPADSADPA). At S258 the chain carries Phosphoserine. Disordered regions lie at residues 268–304 (QRFNLDPESAPSPPSSQQFMMPRSSSRCGSGDGKEPQ), 327–352 (FEQEKKYRPSHGDKTSNPEVLKWMND), and 366–485 (KLSE…DPVS). Residues 282 to 294 (SSQQFMMPRSSSR) are compositionally biased toward low complexity. Over residues 327–342 (FEQEKKYRPSHGDKTS) the composition is skewed to basic and acidic residues. 2 positions are modified to phosphoserine: S405 and S406. Over residues 415-446 (VPEKREQTPPQDDGKGTKQDKNLIKPLYDRCR) the composition is skewed to basic and acidic residues. A compositionally biased stretch (acidic residues) spans 462–471 (QEEEDSDEDC).

This sequence belongs to the FAM13 family.

The polypeptide is Protein FAM13C (Fam13c) (Mus musculus (Mouse)).